Consider the following 58-residue polypeptide: UPF0391 membrane protein MADE_1011595 (58 aa).

Transmembrane regions (helical) follow at residues 4 to 24 (WAIT…GGIA) and 27 to 47 (ATGI…ISLI).

This sequence belongs to the UPF0391 family.

The protein localises to the cell membrane. The protein is UPF0391 membrane protein MADE_1011595 of Alteromonas mediterranea (strain DSM 17117 / CIP 110805 / LMG 28347 / Deep ecotype).